Reading from the N-terminus, the 130-residue chain is Small ribosomal subunit protein uS9 (130 aa).

It belongs to the universal ribosomal protein uS9 family.

The chain is Small ribosomal subunit protein uS9 from Blochmanniella floridana.